A 125-amino-acid polypeptide reads, in one-letter code: Histone H1-like protein Hc1 (125 aa).

Residues 98–125 form a disordered region; sequence TKAKVKPTKKAAPKTKVKTAKKTRSTKK. Basic residues predominate over residues 100 to 125; the sequence is AKVKPTKKAAPKTKVKTAKKTRSTKK.

It belongs to the histone H1/H5 family. HCT subfamily.

Its function is as follows. Might have a role analogous to that of eukaryotic histone proteins. The polypeptide is Histone H1-like protein Hc1 (hctA) (Chlamydia trachomatis serovar L2 (strain ATCC VR-902B / DSM 19102 / 434/Bu)).